Consider the following 122-residue polypeptide: Large ribosomal subunit protein uL14 (122 aa).

Belongs to the universal ribosomal protein uL14 family. In terms of assembly, part of the 50S ribosomal subunit. Forms a cluster with proteins L3 and L19. In the 70S ribosome, L14 and L19 interact and together make contacts with the 16S rRNA in bridges B5 and B8.

Functionally, binds to 23S rRNA. Forms part of two intersubunit bridges in the 70S ribosome. This Cytophaga hutchinsonii (strain ATCC 33406 / DSM 1761 / CIP 103989 / NBRC 15051 / NCIMB 9469 / D465) protein is Large ribosomal subunit protein uL14.